We begin with the raw amino-acid sequence, 437 residues long: Glutamate-1-semialdehyde 2,1-aminomutase (437 aa).

An N6-(pyridoxal phosphate)lysine modification is found at Lys-272.

The protein belongs to the class-III pyridoxal-phosphate-dependent aminotransferase family. HemL subfamily. As to quaternary structure, homodimer. Pyridoxal 5'-phosphate serves as cofactor.

It localises to the cytoplasm. It catalyses the reaction (S)-4-amino-5-oxopentanoate = 5-aminolevulinate. The protein operates within porphyrin-containing compound metabolism; protoporphyrin-IX biosynthesis; 5-aminolevulinate from L-glutamyl-tRNA(Glu): step 2/2. The protein is Glutamate-1-semialdehyde 2,1-aminomutase of Moorella thermoacetica (strain ATCC 39073 / JCM 9320).